Consider the following 210-residue polypeptide: Protein-methionine-sulfoxide reductase heme-binding subunit MsrQ (210 aa).

4 helical membrane passes run 15 to 35 (DTLV…WLAW), 89 to 109 (LFAF…DLFF), 122 to 142 (PFIT…VTST), and 160 to 180 (LVYL…KADH).

It belongs to the MsrQ family. Heterodimer of a catalytic subunit (MsrP) and a heme-binding subunit (MsrQ). The cofactor is FMN. Heme b serves as cofactor.

It localises to the cell inner membrane. In terms of biological role, part of the MsrPQ system that repairs oxidized periplasmic proteins containing methionine sulfoxide residues (Met-O), using respiratory chain electrons. Thus protects these proteins from oxidative-stress damage caused by reactive species of oxygen and chlorine generated by the host defense mechanisms. MsrPQ is essential for the maintenance of envelope integrity under bleach stress, rescuing a wide series of structurally unrelated periplasmic proteins from methionine oxidation. MsrQ provides electrons for reduction to the reductase catalytic subunit MsrP, using the quinone pool of the respiratory chain. The protein is Protein-methionine-sulfoxide reductase heme-binding subunit MsrQ of Caulobacter vibrioides (strain ATCC 19089 / CIP 103742 / CB 15) (Caulobacter crescentus).